Reading from the N-terminus, the 649-residue chain is Ubiquitin-associated and SH3 domain-containing protein B (649 aa).

Ser-20 is modified (phosphoserine). At Thr-23 the chain carries Phosphothreonine. The region spanning Asn-27–His-76 is the UBA domain. An SH3 domain is found at Ala-254 to Glu-319. Residues Gly-380–Glu-649 are protein tyrosine phosphatase. The active site involves Arg-390. His-391 acts as the Tele-phosphohistidine intermediate in catalysis. His-576 is an active-site residue.

As to quaternary structure, homodimer. Interacts with JAK2 (in vitro). Interacts with CBL. Part of a complex containing CBL and activated EGFR. Interacts with ubiquitin and with mono-ubiquitinated proteins. Interacts with ZAP70 (ubiquitinated form).

Its subcellular location is the cytoplasm. It is found in the nucleus. It carries out the reaction O-phospho-L-tyrosyl-[protein] + H2O = L-tyrosyl-[protein] + phosphate. Functionally, interferes with CBL-mediated down-regulation and degradation of receptor-type tyrosine kinases. Promotes accumulation of activated target receptors, such as T-cell receptors and EGFR, on the cell surface. Exhibits tyrosine phosphatase activity toward several substrates including EGFR, FAK, SYK, and ZAP70. Down-regulates proteins that are dually modified by both protein tyrosine phosphorylation and ubiquitination. This is Ubiquitin-associated and SH3 domain-containing protein B (UBASH3B) from Homo sapiens (Human).